The following is a 397-amino-acid chain: Glutamyl-tRNA reductase (397 aa).

Substrate is bound by residues 47–50, Ser98, 103–105, and Gln109; these read TCGR and ETD. Cys48 acts as the Nucleophile in catalysis. 177 to 182 provides a ligand contact to NADP(+); it reads GAGAVG.

Belongs to the glutamyl-tRNA reductase family. As to quaternary structure, homodimer.

The enzyme catalyses (S)-4-amino-5-oxopentanoate + tRNA(Glu) + NADP(+) = L-glutamyl-tRNA(Glu) + NADPH + H(+). The protein operates within porphyrin-containing compound metabolism; protoporphyrin-IX biosynthesis; 5-aminolevulinate from L-glutamyl-tRNA(Glu): step 1/2. In terms of biological role, catalyzes the NADPH-dependent reduction of glutamyl-tRNA(Glu) to glutamate 1-semialdehyde (GSA). In Pyrobaculum aerophilum (strain ATCC 51768 / DSM 7523 / JCM 9630 / CIP 104966 / NBRC 100827 / IM2), this protein is Glutamyl-tRNA reductase.